A 449-amino-acid chain; its full sequence is UDP-glycosyltransferase 76E6 (449 aa).

UDP-alpha-D-glucose contacts are provided by residues Ser274, 333 to 335 (APQ), 350 to 358 (HCGWNSTLE), and 372 to 375 (HGEQ).

Belongs to the UDP-glycosyltransferase family.

This Arabidopsis thaliana (Mouse-ear cress) protein is UDP-glycosyltransferase 76E6 (UGT76E6).